The primary structure comprises 187 residues: MDIIEKRITKRHLSESELSGVNYYNCIFERIQLDNFNFRDCEFEKCRFVNCSIKNLKLNFFKLIDCEFKDCLLQGVNAADIMFPCTFSLVNCDLRFVDFISLRLQKSIFLSCRFRDCLFEETDLRKSDFTGSEFNNTEFRHSDLSHCDFSMTEGLDINPEINRILSIKIPQEAGLKILKRMGVVVGG.

It belongs to the pentapeptide repeat protein family.

In terms of biological role, together with proteins McbE and McbF this protein causes immunity to the peptide antibiotic microcin B17 (MccB17), which inhibits DNA replication in Enterobacteriaceae by induction of the SOS repair system. McbG alone can provide some protection. This Escherichia coli protein is Protein McbG (mcbG).